The primary structure comprises 222 residues: Homing endonuclease I-ApeI (222 aa).

Probably functions as a monomer. It depends on Mg(2+) as a cofactor. The cofactor is Mn(2+).

Its function is as follows. Endonuclease involved in 16S rRNA intron I-alpha homing. Recognizes the minimal target 5'-GCAAGGCTGAAACTTAAAGG-3'; generates 4 base 3' protruding ends 5'-AAAC-3' and 5'-GTTT-3'. In Aeropyrum pernix (strain ATCC 700893 / DSM 11879 / JCM 9820 / NBRC 100138 / K1), this protein is Homing endonuclease I-ApeI (apeI).